A 413-amino-acid polypeptide reads, in one-letter code: L-cysteine:1D-myo-inositol 2-amino-2-deoxy-alpha-D-glucopyranoside ligase (413 aa).

Position 15 (Cys15) interacts with Zn(2+). L-cysteinyl-5'-AMP-binding positions include 15–18 (CGIT), Thr30, and 53–55 (NVT). The short motif at 17–27 (ITPYDATHLGH) is the 'HIGH' region element. Positions 155-160 (ERGGDP) match the 'ERGGDP' region motif. L-cysteinyl-5'-AMP is bound at residue Trp195. Cys199 serves as a coordination point for Zn(2+). Residue 217 to 219 (GTD) coordinates L-cysteinyl-5'-AMP. Position 224 (His224) interacts with Zn(2+). Val251 lines the L-cysteinyl-5'-AMP pocket. The 'KMSKS' region signature appears at 257-261 (KMSKS).

The protein belongs to the class-I aminoacyl-tRNA synthetase family. MshC subfamily. As to quaternary structure, monomer. It depends on Zn(2+) as a cofactor.

It catalyses the reaction 1D-myo-inositol 2-amino-2-deoxy-alpha-D-glucopyranoside + L-cysteine + ATP = 1D-myo-inositol 2-(L-cysteinylamino)-2-deoxy-alpha-D-glucopyranoside + AMP + diphosphate + H(+). Its function is as follows. Catalyzes the ATP-dependent condensation of GlcN-Ins and L-cysteine to form L-Cys-GlcN-Ins. In Frankia alni (strain DSM 45986 / CECT 9034 / ACN14a), this protein is L-cysteine:1D-myo-inositol 2-amino-2-deoxy-alpha-D-glucopyranoside ligase.